A 78-amino-acid polypeptide reads, in one-letter code: MSAHCQVTGRQPSFGKSVSHSHRRTSRRWNPNVQRRKFFVPSMGRTITLTVSTKGLKVIDRDGIEAVVAQIRARGEKI.

Residues Met-1–Trp-29 form a disordered region.

The protein belongs to the bacterial ribosomal protein bL28 family.

This chain is Large ribosomal subunit protein bL28, found in Corynebacterium efficiens (strain DSM 44549 / YS-314 / AJ 12310 / JCM 11189 / NBRC 100395).